The chain runs to 427 residues: Serine--tRNA ligase (427 aa).

Position 230 to 232 (230 to 232 (TAE)) interacts with L-serine. An ATP-binding site is contributed by 261–263 (RAE). An L-serine-binding site is contributed by glutamate 284. Residue 348–351 (EISS) coordinates ATP. Serine 384 contacts L-serine.

This sequence belongs to the class-II aminoacyl-tRNA synthetase family. Type-1 seryl-tRNA synthetase subfamily. Homodimer. The tRNA molecule binds across the dimer.

Its subcellular location is the cytoplasm. The enzyme catalyses tRNA(Ser) + L-serine + ATP = L-seryl-tRNA(Ser) + AMP + diphosphate + H(+). It catalyses the reaction tRNA(Sec) + L-serine + ATP = L-seryl-tRNA(Sec) + AMP + diphosphate + H(+). Its pathway is aminoacyl-tRNA biosynthesis; selenocysteinyl-tRNA(Sec) biosynthesis; L-seryl-tRNA(Sec) from L-serine and tRNA(Sec): step 1/1. In terms of biological role, catalyzes the attachment of serine to tRNA(Ser). Is also able to aminoacylate tRNA(Sec) with serine, to form the misacylated tRNA L-seryl-tRNA(Sec), which will be further converted into selenocysteinyl-tRNA(Sec). This is Serine--tRNA ligase from Syntrophomonas wolfei subsp. wolfei (strain DSM 2245B / Goettingen).